The following is a 384-amino-acid chain: Alkanesulfonate monooxygenase (384 aa).

The protein belongs to the SsuD family.

The enzyme catalyses an alkanesulfonate + FMNH2 + O2 = an aldehyde + FMN + sulfite + H2O + 2 H(+). In terms of biological role, catalyzes the desulfonation of aliphatic sulfonates. This Burkholderia thailandensis (strain ATCC 700388 / DSM 13276 / CCUG 48851 / CIP 106301 / E264) protein is Alkanesulfonate monooxygenase.